The chain runs to 664 residues: Glycine--tRNA ligase beta subunit (664 aa).

The protein belongs to the class-II aminoacyl-tRNA synthetase family. In terms of assembly, tetramer of two alpha and two beta subunits.

The protein resides in the cytoplasm. It carries out the reaction tRNA(Gly) + glycine + ATP = glycyl-tRNA(Gly) + AMP + diphosphate. This Rickettsia peacockii (strain Rustic) protein is Glycine--tRNA ligase beta subunit.